The primary structure comprises 192 residues: Adenine phosphoribosyltransferase (192 aa).

The protein belongs to the purine/pyrimidine phosphoribosyltransferase family. Homodimer.

The protein resides in the cytoplasm. The enzyme catalyses AMP + diphosphate = 5-phospho-alpha-D-ribose 1-diphosphate + adenine. It participates in purine metabolism; AMP biosynthesis via salvage pathway; AMP from adenine: step 1/1. Its function is as follows. Catalyzes a salvage reaction resulting in the formation of AMP, that is energically less costly than de novo synthesis. This is Adenine phosphoribosyltransferase from Corynebacterium efficiens (strain DSM 44549 / YS-314 / AJ 12310 / JCM 11189 / NBRC 100395).